Consider the following 489-residue polypeptide: Cytochrome P450 2C3 (489 aa).

C434 is a binding site for heme.

Belongs to the cytochrome P450 family. Heme is required as a cofactor.

It is found in the endoplasmic reticulum membrane. Its subcellular location is the microsome membrane. It carries out the reaction an organic molecule + reduced [NADPH--hemoprotein reductase] + O2 = an alcohol + oxidized [NADPH--hemoprotein reductase] + H2O + H(+). In terms of biological role, cytochromes P450 are a group of heme-thiolate monooxygenases. In liver microsomes, this enzyme is involved in an NADPH-dependent electron transport pathway. It oxidizes a variety of structurally unrelated compounds, including steroids, fatty acids, and xenobiotics. The polypeptide is Cytochrome P450 2C3 (CYP2C3) (Oryctolagus cuniculus (Rabbit)).